A 251-amino-acid chain; its full sequence is Derlin-1 (251 aa).

S2 carries the post-translational modification N-acetylserine. Residues 2–15 (SDIGDWFRSIPAIT) lie on the Cytoplasmic side of the membrane. A helical membrane pass occupies residues 16 to 31 (RYWFAATVAVPLVGKL). Over 32–69 (GLISPAYLFLWPEAFLYRFQIWRPITATFYFPVGPGTG) the chain is Lumenal. The helical transmembrane segment at 70 to 89 (FLYLVNLYFLYQYSTRLETG) threads the bilayer. The Cytoplasmic segment spans residues 90–94 (AFDGR). Residues 95–115 (PADYLFMLLFNWICIVITGLA) traverse the membrane as a helical segment. At 116–122 (MDMQLLM) the chain is on the lumenal side. Residues 123 to 137 (IPLIMSVLYVWAQLN) traverse the membrane as a helical segment. Over 138–154 (RDMIVSFWFGTRFKACY) the chain is Cytoplasmic. A helical membrane pass occupies residues 155 to 166 (LPWVILGFNYII). Over 167-170 (GGSV) the chain is Lumenal. The chain crosses the membrane as a helical span at residues 171-189 (INELIGNLVGHLYFFLMFR). Residues 190 to 251 (YPMDLGGRNF…WGQGFRLGDQ (62 aa)) are Cytoplasmic-facing. S201 carries the post-translational modification Phosphoserine. T202 bears the Phosphothreonine mark. At S226 the chain carries Phosphoserine. Residues 229–251 (RAADQNGGGGRHNWGQGFRLGDQ) form a disordered region. The SHP-box motif lies at 241-248 (NWGQGFRL).

The protein belongs to the derlin family. Homotetramer. The four subunits of the tetramer are arranged in a twofold symmetry. Forms heterooligomers with DERL2 and DERL3; binding to DERL3 is poorer than that between DERL2 and DERL3. Interacts (via SHP-box motif) with VCP. Interacts with AMFR, SELENOS, SEL1L, SELENOK and SYVN1, as well as with SEL1L-SYVN1 and VCP-SELENOS protein complexes; this interaction is weaker than that observed between DERL2 and these complexes. Interacts with NGLY1 and YOD1. Does not bind to EDEM1. Interacts with DNAJB9. Interacts with RNF103. Interacts with HM13. Interacts with XBP1 isoform 1 (via luminal/ectodomain domain); the interaction obviates the need for ectodomain shedding prior HM13/SPP-mediated XBP1 isoform 1 cleavage. Interacts with the signal recognition particle/SRP and the SRP receptor; in the process of endoplasmic reticulum stress-induced pre-emptive quality control. May interact with UBXN6. Interacts with ZFAND2B; probably through VCP. Interacts with CCDC47. Interacts with C18orf32. May interact with TRAM1. Forms a complex with SVIP and VCP/p97. As to quaternary structure, (Microbial infection) Interacts with the cytomegalovirus US11 protein. Ubiquitous.

Its subcellular location is the endoplasmic reticulum membrane. Functionally, functional component of endoplasmic reticulum-associated degradation (ERAD) for misfolded lumenal proteins. Forms homotetramers which encircle a large channel traversing the endoplasmic reticulum (ER) membrane. This allows the retrotranslocation of misfolded proteins from the ER into the cytosol where they are ubiquitinated and degraded by the proteasome. The channel has a lateral gate within the membrane which provides direct access to membrane proteins with no need to reenter the ER lumen first. May mediate the interaction between VCP and the misfolded protein. Also involved in endoplasmic reticulum stress-induced pre-emptive quality control, a mechanism that selectively attenuates the translocation of newly synthesized proteins into the endoplasmic reticulum and reroutes them to the cytosol for proteasomal degradation. By controlling the steady-state expression of the IGF1R receptor, indirectly regulates the insulin-like growth factor receptor signaling pathway. In terms of biological role, (Microbial infection) In case of infection by cytomegaloviruses, it plays a central role in the export from the ER and subsequent degradation of MHC class I heavy chains via its interaction with US11 viral protein, which recognizes and associates with MHC class I heavy chains. Also participates in the degradation process of misfolded cytomegalovirus US2 protein. The sequence is that of Derlin-1 from Homo sapiens (Human).